The sequence spans 489 residues: Glucose-6-phosphate 1-dehydrogenase (489 aa).

NADP(+) contacts are provided by residues 15–22 (GATGDLAK), R49, 86–87 (DV), and K149. 4 residues coordinate substrate: H179, K183, E217, and D236. H241 acts as the Proton acceptor in catalysis. Residues K341 and K346 each contribute to the substrate site.

It belongs to the glucose-6-phosphate dehydrogenase family.

It catalyses the reaction D-glucose 6-phosphate + NADP(+) = 6-phospho-D-glucono-1,5-lactone + NADPH + H(+). Its pathway is carbohydrate degradation; pentose phosphate pathway; D-ribulose 5-phosphate from D-glucose 6-phosphate (oxidative stage): step 1/3. Catalyzes the oxidation of glucose 6-phosphate to 6-phosphogluconolactone. The polypeptide is Glucose-6-phosphate 1-dehydrogenase (Bacillus subtilis (strain 168)).